Here is a 126-residue protein sequence, read N- to C-terminus: Large ribosomal subunit protein eL18 (126 aa).

It belongs to the eukaryotic ribosomal protein eL18 family.

This chain is Large ribosomal subunit protein eL18, found in Methanosarcina acetivorans (strain ATCC 35395 / DSM 2834 / JCM 12185 / C2A).